Consider the following 480-residue polypeptide: Ribulose bisphosphate carboxylase large chain (480 aa).

Positions 1–2 are excised as a propeptide; the sequence is MS. Pro3 is subject to N-acetylproline. An N6,N6,N6-trimethyllysine modification is found at Lys14. Positions 123 and 173 each coordinate substrate. Lys175 (proton acceptor) is an active-site residue. A substrate-binding site is contributed by Lys177. Lys201, Asp203, and Glu204 together coordinate Mg(2+). N6-carboxylysine is present on Lys201. The active-site Proton acceptor is His294. Positions 295, 327, and 379 each coordinate substrate.

This sequence belongs to the RuBisCO large chain family. Type I subfamily. Heterohexadecamer of 8 large chains and 8 small chains; disulfide-linked. The disulfide link is formed within the large subunit homodimers. Mg(2+) is required as a cofactor. In terms of processing, the disulfide bond which can form in the large chain dimeric partners within the hexadecamer appears to be associated with oxidative stress and protein turnover.

The protein resides in the plastid. The protein localises to the chloroplast. It catalyses the reaction 2 (2R)-3-phosphoglycerate + 2 H(+) = D-ribulose 1,5-bisphosphate + CO2 + H2O. The catalysed reaction is D-ribulose 1,5-bisphosphate + O2 = 2-phosphoglycolate + (2R)-3-phosphoglycerate + 2 H(+). RuBisCO catalyzes two reactions: the carboxylation of D-ribulose 1,5-bisphosphate, the primary event in carbon dioxide fixation, as well as the oxidative fragmentation of the pentose substrate in the photorespiration process. Both reactions occur simultaneously and in competition at the same active site. The sequence is that of Ribulose bisphosphate carboxylase large chain from Phalaenopsis aphrodite subsp. formosana (Moth orchid).